A 302-amino-acid polypeptide reads, in one-letter code: ATP synthase subunit b 1 (302 aa).

Residues 5 to 22 (WFTVIAQGINFLLLLWLL) traverse the membrane as a helical segment. The tract at residues 278–302 (GLPENEGTDNPEANPPHAEAKIPHA) is disordered.

This sequence belongs to the ATPase B chain family. As to quaternary structure, F-type ATPases have 2 components, F(1) - the catalytic core - and F(0) - the membrane proton channel. F(1) has five subunits: alpha(3), beta(3), gamma(1), delta(1), epsilon(1). F(0) has three main subunits: a(1), b(2) and c(10-14). The alpha and beta chains form an alternating ring which encloses part of the gamma chain. F(1) is attached to F(0) by a central stalk formed by the gamma and epsilon chains, while a peripheral stalk is formed by the delta and b chains.

The protein resides in the cell inner membrane. Functionally, f(1)F(0) ATP synthase produces ATP from ADP in the presence of a proton or sodium gradient. F-type ATPases consist of two structural domains, F(1) containing the extramembraneous catalytic core and F(0) containing the membrane proton channel, linked together by a central stalk and a peripheral stalk. During catalysis, ATP synthesis in the catalytic domain of F(1) is coupled via a rotary mechanism of the central stalk subunits to proton translocation. Component of the F(0) channel, it forms part of the peripheral stalk, linking F(1) to F(0). This is ATP synthase subunit b 1 from Pseudoalteromonas atlantica (strain T6c / ATCC BAA-1087).